The following is a 289-amino-acid chain: Phenylalanine-4-hydroxylase (289 aa).

His-144, His-149, and Glu-189 together coordinate Fe cation.

Belongs to the biopterin-dependent aromatic amino acid hydroxylase family. Fe(2+) serves as cofactor.

It catalyses the reaction (6R)-L-erythro-5,6,7,8-tetrahydrobiopterin + L-phenylalanine + O2 = (4aS,6R)-4a-hydroxy-L-erythro-5,6,7,8-tetrahydrobiopterin + L-tyrosine. It functions in the pathway amino-acid degradation; L-phenylalanine degradation; acetoacetate and fumarate from L-phenylalanine: step 1/6. The chain is Phenylalanine-4-hydroxylase (phhA) from Vibrio cholerae serotype O1 (strain ATCC 39315 / El Tor Inaba N16961).